Reading from the N-terminus, the 150-residue chain is Flagellar assembly factor FliW (150 aa).

This sequence belongs to the FliW family. Interacts with translational regulator CsrA and flagellin(s).

The protein resides in the cytoplasm. In terms of biological role, acts as an anti-CsrA protein, binds CsrA and prevents it from repressing translation of its target genes, one of which is flagellin. Binds to flagellin and participates in the assembly of the flagellum. The polypeptide is Flagellar assembly factor FliW (Leptospira borgpetersenii serovar Hardjo-bovis (strain JB197)).